The primary structure comprises 466 residues: Ceramide glucosyltransferase 1 (466 aa).

A helical membrane pass occupies residues 70-90 (LALSGCIFVSVLYLVHIIAFF). Residue aspartate 148 is a short sequence motif, D1. A short sequence motif (D2) is located at residue aspartate 200. Position 294 (aspartate 294) is a short sequence motif, D3. Aspartate 294 serves as the catalytic Proton acceptor. The (Q/R)XXRW signature appears at 330–334 (RIGRW). 2 consecutive transmembrane segments (helical) span residues 354–374 (CVTS…YSVY) and 403–423 (TPFL…FIFI).

This sequence belongs to the glycosyltransferase 2 family. As to expression, expressed in excretory canals, pharyngeal intestinal valve, intestine and intestinal rectal valve.

It is found in the membrane. It catalyses the reaction an N-acylsphing-4-enine + UDP-alpha-D-glucose = a beta-D-glucosyl-(1&lt;-&gt;1')-N-acylsphing-4-enine + UDP + H(+). It carries out the reaction an N-acyl-15-methylhexadecasphing-4-enine + UDP-alpha-D-glucose = an N-acyl-1-beta-D-glucosyl-15-methylhexadecasphing-4-enine + UDP + H(+). It functions in the pathway lipid metabolism; sphingolipid metabolism. Functionally, catalyzes the first glycosylation step in glycosphingolipid biosynthesis, the transfer of glucose to ceramide to produce glucosylceramides (GlcCer). GlcCer are known to contribute to the physical properties and physiological functions of membranes and may regulate signal transduction. Only branched-chain sphingoid bases like 15-methylhexadecasphing-4-enine are used for generating complex sphingolipids in Caenorhabditis elegans. Together with cgt-3, plays a role in the trafficking of proteins such as mig-14 to the cell membrane in intestinal cells. The polypeptide is Ceramide glucosyltransferase 1 (Caenorhabditis elegans).